The sequence spans 344 residues: Type VI secretion system component TssA1 (344 aa).

Homododecamer. Interacts with TssB1 and TssC1. Interacts with TssK1 and TssF1.

Functionally, core component of the H1 type VI (H1-T6SS) secretion system that plays a role in the release of toxins targeting both eukaryotic and prokaryotic species. Forms a dodecameric ring-shaped structure located at one end of the T6SS sheath. May properly attach the pre-assembled sheath onto the baseplate and/or stabilize the sheaths tubular structure. In Pseudomonas aeruginosa (strain ATCC 15692 / DSM 22644 / CIP 104116 / JCM 14847 / LMG 12228 / 1C / PRS 101 / PAO1), this protein is Type VI secretion system component TssA1.